A 564-amino-acid chain; its full sequence is Cytochrome P450 monooxygenase fsdH (564 aa).

A helical membrane pass occupies residues 18–38; the sequence is GSVSLAVLSTLAVVIAGWYIL. Cysteine 472 contacts heme.

It belongs to the cytochrome P450 family. Heme is required as a cofactor.

The protein localises to the membrane. Its pathway is mycotoxin biosynthesis. In terms of biological role, cytochrome P450 monooxygenase; part of the gene cluster that mediates the biosynthesis of fusaridione A, a bright yellow trans-fused decalin-containing tetramic acid with antimicrobial activity. The PKS module of fsdS catalyzes the formation of the polyketide unit which is then conjugated to L-tyrosine by the condensation domain of the fsdS NRPS module. Activity of the Dieckmann cyclase domain (RED) results in release of the intermediate fusaridione A. The unstable pyrrolidinedione ring of fusaridione A is opened through a reverse-Dieckmann reaction to afford its ring-opened form. The chain is Cytochrome P450 monooxygenase fsdH from Fusarium heterosporum.